Consider the following 262-residue polypeptide: Phosphatidylserine decarboxylase proenzyme (262 aa).

Catalysis depends on charge relay system; for autoendoproteolytic cleavage activity residues Asp86, His142, and Ser226. The active-site Schiff-base intermediate with substrate; via pyruvic acid; for decarboxylase activity is Ser226. Ser226 is modified (pyruvic acid (Ser); by autocatalysis).

Belongs to the phosphatidylserine decarboxylase family. PSD-B subfamily. Prokaryotic type I sub-subfamily. As to quaternary structure, heterodimer of a large membrane-associated beta subunit and a small pyruvoyl-containing alpha subunit. It depends on pyruvate as a cofactor. In terms of processing, is synthesized initially as an inactive proenzyme. Formation of the active enzyme involves a self-maturation process in which the active site pyruvoyl group is generated from an internal serine residue via an autocatalytic post-translational modification. Two non-identical subunits are generated from the proenzyme in this reaction, and the pyruvate is formed at the N-terminus of the alpha chain, which is derived from the carboxyl end of the proenzyme. The autoendoproteolytic cleavage occurs by a canonical serine protease mechanism, in which the side chain hydroxyl group of the serine supplies its oxygen atom to form the C-terminus of the beta chain, while the remainder of the serine residue undergoes an oxidative deamination to produce ammonia and the pyruvoyl prosthetic group on the alpha chain. During this reaction, the Ser that is part of the protease active site of the proenzyme becomes the pyruvoyl prosthetic group, which constitutes an essential element of the active site of the mature decarboxylase.

It localises to the cell membrane. It catalyses the reaction a 1,2-diacyl-sn-glycero-3-phospho-L-serine + H(+) = a 1,2-diacyl-sn-glycero-3-phosphoethanolamine + CO2. The protein operates within phospholipid metabolism; phosphatidylethanolamine biosynthesis; phosphatidylethanolamine from CDP-diacylglycerol: step 2/2. Functionally, catalyzes the formation of phosphatidylethanolamine (PtdEtn) from phosphatidylserine (PtdSer). The sequence is that of Phosphatidylserine decarboxylase proenzyme from Bacillus thuringiensis subsp. konkukian (strain 97-27).